A 397-amino-acid chain; its full sequence is Gastric triacylglycerol lipase (397 aa).

Positions 1–19 are cleaved as a signal peptide; that stretch reads MWWLLVTVCFIHMSGNAFC. Asn-33 is a glycosylation site (N-linked (GlcNAc...) asparagine). Residues 77 to 376 form the AB hydrolase-1 domain; the sequence is PVVFLQHGLL…PNYNHLDFIW (300 aa). Ser-171 serves as the catalytic Nucleophile. An intrachain disulfide couples Cys-245 to Cys-254. 2 N-linked (GlcNAc...) asparagine glycosylation sites follow: Asn-270 and Asn-326. Catalysis depends on charge relay system residues Asp-342 and His-371.

The protein belongs to the AB hydrolase superfamily. Lipase family.

It localises to the secreted. It catalyses the reaction a triacylglycerol + H2O = a diacylglycerol + a fatty acid + H(+). The enzyme catalyses 1,2,3-tri-(9Z-octadecenoyl)-glycerol + H2O = 1,2-di-(9Z-octadecenoyl)-sn-glycerol + (9Z)-octadecenoate + H(+). It carries out the reaction 1,2,3-trioctanoylglycerol + H2O = 1,2-dioctanoyl-sn-glycerol + octanoate + H(+). With respect to regulation, inhibited by diethylp-nitrophenyl phosphate but not inhibited by thiol reagents 5,5'-dithiobis(2-nitrobenzoic acid) or 4,4'-dithiopyridine. Catalyzes the hydrolysis of triacylglycerols to yield free fatty acids, diacylglycerol, monoacylglycerol, and glycerol. Shows a preferential hydrolysis at the sn-3 position of triacylglycerol. The sequence is that of Gastric triacylglycerol lipase (LIPF) from Bos taurus (Bovine).